Consider the following 541-residue polypeptide: uncharacterized protein (541 aa).

The signal sequence occupies residues 1–17 (MSFSATILFSPPSGSEA). Disordered stretches follow at residues 28 to 47 (TSQG…TPIT) and 103 to 138 (GKVC…SNSL). Residues 103–116 (GKVCTADEDRESRA) are compositionally biased toward basic and acidic residues. At threonine 118 the chain carries Phosphothreonine. Residues lysine 128 and lysine 223 each participate in a glycyl lysine isopeptide (Lys-Gly) (interchain with G-Cter in SUMO2) cross-link. Serine 226 is subject to Phosphoserine. The segment covering 232 to 243 (AIQRASSETGPE) has biased composition (polar residues). Positions 232–254 (AIQRASSETGPESGTKLPATRPE) are disordered. 2 positions are modified to phosphoserine: serine 286 and serine 429. A disordered region spans residues 494-526 (YNPNFQEDEGGGNEKGPVSPSYDQPHKTSCPDL).

It is found in the secreted. This is an uncharacterized protein from Mus musculus (Mouse).